We begin with the raw amino-acid sequence, 1411 residues long: DNA-directed RNA polymerase subunit beta' (1411 aa).

4 residues coordinate Zn(2+): C70, C72, C85, and C88. D458, D460, and D462 together coordinate Mg(2+). Residues C813, C887, C894, and C897 each coordinate Zn(2+). The interval 1391–1411 (AQAEVPELDGSSVTASDAAAD) is disordered.

This sequence belongs to the RNA polymerase beta' chain family. The RNAP catalytic core consists of 2 alpha, 1 beta, 1 beta' and 1 omega subunit. When a sigma factor is associated with the core the holoenzyme is formed, which can initiate transcription. Mg(2+) serves as cofactor. Zn(2+) is required as a cofactor.

The enzyme catalyses RNA(n) + a ribonucleoside 5'-triphosphate = RNA(n+1) + diphosphate. Its function is as follows. DNA-dependent RNA polymerase catalyzes the transcription of DNA into RNA using the four ribonucleoside triphosphates as substrates. This is DNA-directed RNA polymerase subunit beta' from Verminephrobacter eiseniae (strain EF01-2).